Consider the following 666-residue polypeptide: MAMTWIVFSLWPLTVFMGHIGGHSLFSCEPITLRMCQDLPYNTTFMPNLLNHYDQQTAALAMEPFHPMVNLDCSRDFRPFLCALYAPICMEYGRVTLPCRRLCQRAYSECSKLMEMFGVPWPEDMECSRFPDCDEPYPRLVDLNLAGEPTEGAPVAVQRDYGFWCPRELKIDPDLGYSFLHVRDCSPPCPNMYFRREELSFARYFIGLISIICLSATLFTFLTFLIDVTRFRYPERPIIFYAVCYMMVSLIFFIGFLLEDRVACNASIPAQYKASTVTQGSHNKACTMLFMILYFFTMAGSVWWVILTITWFLAAVPKWGSEAIEKKALLFHASAWGIPGTLTIILLAMNKIEGDNISGVCFVGLYDVDALRYFVLAPLCLYVVVGVSLLLAGIISLNRVRIEIPLEKENQDKLVKFMIRIGVFSILYLVPLLVVIGCYFYEQAYRGIWETTWIQERCREYHIPCPYQVTQMSRPDLILFLMKYLMALIVGIPSVFWVGSKKTCFEWASFFHGRRKKEIVNESRQVLQEPDFAQSLLRDPNTPIIRKSRGTSTQGTSTHASSTQLAMVDDQRSKAGSIHSKVSSYHGSLHRSRDGRYTPCSYRGMEERLPHGSMSRLTDHSRHSSSHRLNEQSRHSSIRDLSNNPMTHITHGTSMNRVIEEDGTSA.

The N-terminal stretch at 1 to 22 is a signal peptide; the sequence is MAMTWIVFSLWPLTVFMGHIGG. The FZ domain occupies 23–136; sequence HSLFSCEPIT…CSRFPDCDEP (114 aa). Residues 23–205 are Extracellular-facing; that stretch reads HSLFSCEPIT…REELSFARYF (183 aa). 5 disulfides stabilise this stretch: cysteine 28/cysteine 89, cysteine 36/cysteine 82, cysteine 73/cysteine 110, cysteine 99/cysteine 133, and cysteine 103/cysteine 127. N-linked (GlcNAc...) asparagine glycosylation is present at asparagine 42. A helical membrane pass occupies residues 206–226; that stretch reads IGLISIICLSATLFTFLTFLI. Residues 227-237 are Cytoplasmic-facing; sequence DVTRFRYPERP. The helical transmembrane segment at 238–258 threads the bilayer; it reads IIFYAVCYMMVSLIFFIGFLL. At 259-288 the chain is on the extracellular side; sequence EDRVACNASIPAQYKASTVTQGSHNKACTM. Asparagine 265 carries N-linked (GlcNAc...) asparagine glycosylation. The helical transmembrane segment at 289–309 threads the bilayer; it reads LFMILYFFTMAGSVWWVILTI. At 310–328 the chain is on the cytoplasmic side; it reads TWFLAAVPKWGSEAIEKKA. Residues 329-349 form a helical membrane-spanning segment; that stretch reads LLFHASAWGIPGTLTIILLAM. At 350-374 the chain is on the extracellular side; that stretch reads NKIEGDNISGVCFVGLYDVDALRYF. The N-linked (GlcNAc...) asparagine glycan is linked to asparagine 356. The helical transmembrane segment at 375-395 threads the bilayer; the sequence is VLAPLCLYVVVGVSLLLAGII. Topologically, residues 396–420 are cytoplasmic; it reads SLNRVRIEIPLEKENQDKLVKFMIR. Residues 421 to 441 form a helical membrane-spanning segment; sequence IGVFSILYLVPLLVVIGCYFY. At 442–477 the chain is on the extracellular side; sequence EQAYRGIWETTWIQERCREYHIPCPYQVTQMSRPDL. Residues 478-498 traverse the membrane as a helical segment; that stretch reads ILFLMKYLMALIVGIPSVFWV. Over 499–666 the chain is Cytoplasmic; the sequence is GSKKTCFEWA…RVIEEDGTSA (168 aa). Positions 502-507 match the Lys-Thr-X-X-X-Trp motif, mediates interaction with the PDZ domain of Dvl family members motif; sequence KTCFEW. Positions 538–666 are disordered; that stretch reads RDPNTPIIRK…RVIEEDGTSA (129 aa). The segment covering 550-565 has biased composition (polar residues); sequence GTSTQGTSTHASSTQL. Residues 617 to 638 are compositionally biased toward basic and acidic residues; it reads LTDHSRHSSSHRLNEQSRHSSI. Polar residues predominate over residues 639-656; that stretch reads RDLSNNPMTHITHGTSMN.

It belongs to the G-protein coupled receptor Fz/Smo family. Interacts with VANGL2. Post-translationally, ubiquitinated by ZNRF3, leading to its degradation by the proteasome. In terms of tissue distribution, widely expressed. Relatively high expression in the CNS, including regions of the limbic system, in kidney, pancreas, skeletal muscle, uterus and testis.

The protein localises to the membrane. Its subcellular location is the cell membrane. The protein resides in the cell surface. It is found in the apical cell membrane. Its function is as follows. Receptor for Wnt proteins. Most of frizzled receptors are coupled to the beta-catenin canonical signaling pathway, which leads to the activation of disheveled proteins, inhibition of GSK-3 kinase, nuclear accumulation of beta-catenin and activation of Wnt target genes. A second signaling pathway involving PKC and calcium fluxes has been seen for some family members, but it is not yet clear if it represents a distinct pathway or if it can be integrated in the canonical pathway, as PKC seems to be required for Wnt-mediated inactivation of GSK-3 kinase. Both pathways seem to involve interactions with G-proteins. Activation by Wnt5A stimulates PKC activity via a G-protein-dependent mechanism. Involved in transduction and intercellular transmission of polarity information during tissue morphogenesis and/or in differentiated tissues. Plays a role in controlling early axon growth and guidance processes necessary for the formation of a subset of central and peripheral major fiber tracts. Required for the development of major fiber tracts in the central nervous system, including: the anterior commissure, the corpus callosum, the thalamocortical, corticothalamic and nigrostriatal tracts, the corticospinal tract, the fasciculus retroflexus, the mammillothalamic tract, the medial lemniscus, and ascending fiber tracts from the spinal cord to the brain. In the peripheral nervous system, controls axon growth in distinct populations of cranial and spinal motor neurons, including the facial branchimotor nerve, the hypoglossal nerve, the phrenic nerve, and motor nerves innervating dorsal limbs. Involved in the migration of cranial neural crest cells. May also be implicated in the transmission of sensory information from the trunk and limbs to the brain. Controls commissural sensory axons guidance after midline crossing along the anterior-posterior axis in the developing spinal cord in a Wnt-dependent signaling pathway. Together with FZD6, is involved in the neural tube closure and plays a role in the regulation of the establishment of planar cell polarity (PCP), particularly in the orientation of asymmetric bundles of stereocilia on the apical faces of a subset of auditory and vestibular sensory cells located in the inner ear. Promotes neurogenesis by maintaining sympathetic neuroblasts within the cell cycle in a beta-catenin-dependent manner. This chain is Frizzled-3 (FZD3), found in Homo sapiens (Human).